Consider the following 1235-residue polypeptide: ATP-dependent helicase/nuclease subunit A (1235 aa).

Residues 12–482 (SLWTDDQWKA…IDLSQNFRSR (471 aa)) form the UvrD-like helicase ATP-binding domain. An ATP-binding site is contributed by 33-40 (AAAGSGKT). Residues 509–800 (AAELTLGANF…RMMTIHASKG (292 aa)) enclose the UvrD-like helicase C-terminal domain.

The protein belongs to the helicase family. AddA subfamily. In terms of assembly, heterodimer of AddA and AddB/RexB. Requires Mg(2+) as cofactor.

The catalysed reaction is Couples ATP hydrolysis with the unwinding of duplex DNA by translocating in the 3'-5' direction.. The enzyme catalyses ATP + H2O = ADP + phosphate + H(+). Functionally, the heterodimer acts as both an ATP-dependent DNA helicase and an ATP-dependent, dual-direction single-stranded exonuclease. Recognizes the chi site generating a DNA molecule suitable for the initiation of homologous recombination. The AddA nuclease domain is required for chi fragment generation; this subunit has the helicase and 3' -&gt; 5' nuclease activities. The protein is ATP-dependent helicase/nuclease subunit A of Listeria monocytogenes serovar 1/2a (strain ATCC BAA-679 / EGD-e).